The primary structure comprises 931 residues: MAEVEAVQLKEEGNRHFQLQDYKAATNSYSQALKLTKDKALLATLYRNRAACGLKTESYVQAASDASRAIDINSSDIKALYRRCQALEHLGKLDQAFKDVQRCATLEPRNQNFQEMLRRLNTSIQEKLRVQFSTDSRVQKMFEILLDENSEADKREKAANNLIVLGREEAGAEKIFQNNGVALLLQLLDTKKPELVLAAVRTLSGMCSGHQARATVILHAVRIDRICSLMAVENEEMSLAVCNLLQAIIDSLSGEDKREHRGKEEALVLDTKKDLKQITSHLLDMLVSKKVSGQGRDQALNLLNKNVPRKDLAIHDNSRTIYVVDNGLRKILKVVGQVPDLPSCLPLTDNTRMLASILINKLYDDLRCDPERDHFRKICEEYITGKFDPQDMDKNLNAIQTVSGILQGPFDLGNQLLGLKGVMEMMVALCGSERETDQLVAVEALIHASTKLSRATFIITNGVSLLKQIYKTTKNEKIKIRTLVGLCKLGSAGGTDYGLRQFAEGSTEKLAKQCRKWLCNMSIDTRTRRWAVEGLAYLTLDADVKDDFVQDVPALQAMFELAKAGTSDKTILYSVATTLVNCTNSYDVKEVIPELVQLAKFSKQHVPEEHPKDKKDFIDMRVKRLLKAGVISALACMVKADSAILTDQTKELLARVFLALCDNPKDRGTIVAQGGGKALIPLALEGTDVGKVKAAHALAKIAAVSNPDIAFPGERVYEVVRPLVRLLDTQRDGLQNYEALLGLTNLSGRSDKLRQKIFKERALPDIENYMFENHDQLRQAATECMCNMVLHKEVQERFLADGNDRLKLVVLLCGEDDDKVQNAAAGALAMLTAAHKKLCLKMTQVTTQWLEILQRLCLHDQLSVQHRGLVIAYNLLAADAELAKKLVESELLEILTVVGKQEPDEKKAEVVQTARECLIKCMDYGFIKPVS.

TPR repeat units lie at residues 6-39 (AVQL…TKDK), 43-76 (ATLY…NSSD), and 77-110 (IKAL…EPRN). ARM repeat units lie at residues 169–208 (EAGA…GMCS), 211–250 (QARA…AIID), and 751–790 (DKLR…NMVL).

As to quaternary structure, interacts with HSP90 in an ATP-independent manner. Interacts with UBE4B; the interaction may target UNC45B for proteasomal degradation. As to expression, expressed in eye lens tissues. Expressed in muscle (at protein level).

Its subcellular location is the cytoplasm. The protein localises to the myofibril. It localises to the sarcomere. The protein resides in the z line. It is found in the a band. Its subcellular location is the perinuclear region. The protein localises to the cytosol. In terms of biological role, acts as a co-chaperone for HSP90 and is required for proper folding of the myosin motor domain. Plays a role in sarcomere formation during muscle cell development. Is necessary for normal early lens development. This chain is Protein unc-45 homolog B, found in Homo sapiens (Human).